Reading from the N-terminus, the 105-residue chain is UPF0145 protein GK1405 (105 aa).

Belongs to the UPF0145 family.

The protein is UPF0145 protein GK1405 of Geobacillus kaustophilus (strain HTA426).